The chain runs to 145 residues: Toxin Res (145 aa).

This sequence belongs to the MbcT/ParT/Res family. In terms of assembly, homodimer. Forms a complex with cognate antitoxin Xre; the 2 toxin molecules dimerize and each contacts an Xre homodimer. Most Res-Xre contacts are between the antitoxin molecule closest to the toxin.

Toxic component of a type II toxin-antitoxin (TA) system. Expression in E.coli inhibits cell growth. In vivo it is probably neutralized by cognate antitoxin Xre; this has not been shown upon expression in E.coli. Probably depletes intracellular NAD(+). The chain is Toxin Res from Pseudomonas putida (strain ATCC 47054 / DSM 6125 / CFBP 8728 / NCIMB 11950 / KT2440).